A 317-amino-acid polypeptide reads, in one-letter code: Ribonuclease Z (317 aa).

7 residues coordinate Zn(2+): His63, His65, Asp67, His68, His143, Asp213, and His273. Asp67 functions as the Proton acceptor in the catalytic mechanism.

It belongs to the RNase Z family. Homodimer. The cofactor is Zn(2+).

It catalyses the reaction Endonucleolytic cleavage of RNA, removing extra 3' nucleotides from tRNA precursor, generating 3' termini of tRNAs. A 3'-hydroxy group is left at the tRNA terminus and a 5'-phosphoryl group is left at the trailer molecule.. Functionally, zinc phosphodiesterase, which displays some tRNA 3'-processing endonuclease activity. Probably involved in tRNA maturation, by removing a 3'-trailer from precursor tRNA. This chain is Ribonuclease Z, found in Methanocaldococcus jannaschii (strain ATCC 43067 / DSM 2661 / JAL-1 / JCM 10045 / NBRC 100440) (Methanococcus jannaschii).